Here is a 190-residue protein sequence, read N- to C-terminus: UPF0200 protein OE_4442F (190 aa).

Glycine 8 to serine 15 is a binding site for ATP. Residues alanine 120–arginine 144 are disordered.

The protein belongs to the UPF0200 family.

The sequence is that of UPF0200 protein OE_4442F from Halobacterium salinarum (strain ATCC 29341 / DSM 671 / R1).